A 396-amino-acid chain; its full sequence is Arginine biosynthesis bifunctional protein ArgJ (396 aa).

Residues T147, K173, T184, E270, N391, and S396 each contribute to the substrate site. Residue T184 is the Nucleophile of the active site.

The protein belongs to the ArgJ family. In terms of assembly, heterotetramer of two alpha and two beta chains.

The protein localises to the cytoplasm. The enzyme catalyses N(2)-acetyl-L-ornithine + L-glutamate = N-acetyl-L-glutamate + L-ornithine. The catalysed reaction is L-glutamate + acetyl-CoA = N-acetyl-L-glutamate + CoA + H(+). Its pathway is amino-acid biosynthesis; L-arginine biosynthesis; L-ornithine and N-acetyl-L-glutamate from L-glutamate and N(2)-acetyl-L-ornithine (cyclic): step 1/1. It participates in amino-acid biosynthesis; L-arginine biosynthesis; N(2)-acetyl-L-ornithine from L-glutamate: step 1/4. Catalyzes two activities which are involved in the cyclic version of arginine biosynthesis: the synthesis of N-acetylglutamate from glutamate and acetyl-CoA as the acetyl donor, and of ornithine by transacetylation between N(2)-acetylornithine and glutamate. The chain is Arginine biosynthesis bifunctional protein ArgJ from Lactococcus lactis subsp. lactis (strain IL1403) (Streptococcus lactis).